We begin with the raw amino-acid sequence, 735 residues long: MRNEPQITPDLVAAHGLKPDEYERILKLIGRVPTFTELGIFSAMWNEHCSYKSSRIHLRGLPTKAPWVIQGPGENAGVIDIGDGQAVVFKMESHNHPSYIEPYQGATTGVGGILRDVFTMGARPIACLNALSFGAPEHPKTRHLVSGVVAGIGGYGNSFGVPTVGGQTRFHTRYDGNILVNAMAVGLADADKIFYAAASGVNMPIVYLGSKTGRDGIHGASMASAEFDDSSEEKRPTVQVGDPFAEKLLLEACLEIMAADCVIAIQDMGAAGLTCSAVEMGAKGDLGVDLDLDAVPTRETGMSAYEMMLSESQERMLMVLKPEKEKEAEAIFRKWGLDFAVVGYTTPSKRFVVKHGGDVMADLPIKELGDEAPLYDRPHVASPALPVIHAREVKAPMDIIPALEKLIATPDLCSKRWIWEQYDHVILGNTVQRPGGDAAVVRVQDGPKGLALTVDVTPRYCEADPYQGGMQAVAEAWRNITAVGGRPLAITDNLNFGNPERPEIMGQFVGCLKGISEACRALDFPVVSGNVSLYNETNGRAILPTPSIGGVGLLDDFTKSASIAFEAEGEAILLIGETHGWLGQSVYLRDVCGREEGAPPPVDLAAEKRIGDVVRGMIHAGTATAAHDLSDGGLLVALAEMAMASGIGARLLAAPASIVPHAYWFGEDQARYLVTVPETEAGRVLAKMRGAGVPCTRIGTTGGSALAIAGEASVEVTTLKTRFESWLPGYMGGAA.

H48 is a catalytic residue. 2 residues coordinate ATP: Y51 and K90. Residue E92 participates in Mg(2+) binding. Residues 93–96 (SHNH) and R115 each bind substrate. Residue H94 is the Proton acceptor of the active site. D116 is a Mg(2+) binding site. Q239 contributes to the substrate binding site. D267 is a Mg(2+) binding site. Residue 311–313 (ESQ) participates in substrate binding. ATP-binding residues include D492 and G529. Residue N530 coordinates Mg(2+). S532 provides a ligand contact to substrate.

This sequence belongs to the FGAMS family. Monomer. Part of the FGAM synthase complex composed of 1 PurL, 1 PurQ and 2 PurS subunits.

It localises to the cytoplasm. It catalyses the reaction N(2)-formyl-N(1)-(5-phospho-beta-D-ribosyl)glycinamide + L-glutamine + ATP + H2O = 2-formamido-N(1)-(5-O-phospho-beta-D-ribosyl)acetamidine + L-glutamate + ADP + phosphate + H(+). It functions in the pathway purine metabolism; IMP biosynthesis via de novo pathway; 5-amino-1-(5-phospho-D-ribosyl)imidazole from N(2)-formyl-N(1)-(5-phospho-D-ribosyl)glycinamide: step 1/2. Functionally, part of the phosphoribosylformylglycinamidine synthase complex involved in the purines biosynthetic pathway. Catalyzes the ATP-dependent conversion of formylglycinamide ribonucleotide (FGAR) and glutamine to yield formylglycinamidine ribonucleotide (FGAM) and glutamate. The FGAM synthase complex is composed of three subunits. PurQ produces an ammonia molecule by converting glutamine to glutamate. PurL transfers the ammonia molecule to FGAR to form FGAM in an ATP-dependent manner. PurS interacts with PurQ and PurL and is thought to assist in the transfer of the ammonia molecule from PurQ to PurL. This is Phosphoribosylformylglycinamidine synthase subunit PurL from Bradyrhizobium sp. (strain BTAi1 / ATCC BAA-1182).